The sequence spans 352 residues: MHLYFSCFILLFVPGGKSLGINSHLKHMSNKSQDQVNRTRTVGSKDVAALPLSSYMFNLYQSFHHSELNHGMEAAPSLSLNHRADIIRSLAVKSYDHGGSLWTFLFDFSSLSQEEEHQFAEVRFDFRAFSDAILVGMEVIVDFFHQSSTCQSISGFCQSYLYVGSLTSTLWPRSSDTWVTFEATDIIHKWFERNDKGKNHSEGHMKQPKKLHRAKSAERRYQQRSTENPQILMMVYSNISKKEKLSGTATLLQDAAHSKYLAVMPGIQTIANSRRHRRSHIFNEHIMGMKHVPSADSSRTLCRRVDFFVDFKQIGWDSWIIHPVKYNAYRCEGECPSPVNERLKPNNHAYMQ.

Positions 1-18 are cleaved as a signal peptide; the sequence is MHLYFSCFILLFVPGGKS. Residues 19–278 constitute a propeptide that is removed on maturation; sequence LGINSHLKHM…TIANSRRHRR (260 aa). 4 N-linked (GlcNAc...) asparagine glycosylation sites follow: Asn-30, Asn-37, Asn-199, and Asn-238. Residues 197–223 are disordered; it reads GKNHSEGHMKQPKKLHRAKSAERRYQQ.

This sequence belongs to the TGF-beta family. In terms of assembly, homodimer; disulfide-linked.

The protein resides in the secreted. Its function is as follows. Cooperation and regulatory loops of multiple nodals are essential for mesendoderm patterning in early embryos. Plays a role in mesoderm formation and may be required for neural development. This Xenopus laevis (African clawed frog) protein is Nodal homolog 4-B (nodal4-b).